A 157-amino-acid polypeptide reads, in one-letter code: Protein Smg homolog (157 aa).

Belongs to the Smg family.

The sequence is that of Protein Smg homolog from Tolumonas auensis (strain DSM 9187 / NBRC 110442 / TA 4).